The chain runs to 554 residues: Carboxylesterase 1C (554 aa).

A signal peptide spans Met1–Gly18. Asn79 carries N-linked (GlcNAc...) asparagine glycosylation. The cysteines at positions 87 and 116 are disulfide-linked. Ser221 acts as the Acyl-ester intermediate in catalysis. Cys273 and Cys284 form a disulfide bridge. N-linked (GlcNAc...) asparagine glycosylation is found at Asn274 and Asn304. The active-site Charge relay system is the Glu342. A glycan (N-linked (GlcNAc...) asparagine) is linked at Asn377. The Charge relay system role is filled by His455. The residue at position 473 (Ser473) is a Phosphoserine. A glycan (N-linked (GlcNAc...) asparagine) is linked at Asn478. Positions Thr551–Lys554 match the Prevents secretion from ER motif.

Belongs to the type-B carboxylesterase/lipase family. In terms of tissue distribution, expressed in lung, kidney and liver.

The protein resides in the endoplasmic reticulum lumen. It carries out the reaction a carboxylic ester + H2O = an alcohol + a carboxylate + H(+). In terms of biological role, involved in the detoxification of xenobiotics and in the activation of ester and amide prodrugs. Involved in the extracellular metabolism of lung surfactant. The chain is Carboxylesterase 1C (Ces1c) from Mus musculus (Mouse).